The primary structure comprises 462 residues: A-type ATP synthase subunit B (462 aa).

The protein belongs to the ATPase alpha/beta chains family. As to quaternary structure, has multiple subunits with at least A(3), B(3), C, D, E, F, H, I and proteolipid K(x).

The protein localises to the cell membrane. Its function is as follows. Component of the A-type ATP synthase that produces ATP from ADP in the presence of a proton gradient across the membrane. The B chain is a regulatory subunit. This Cenarchaeum symbiosum (strain A) protein is A-type ATP synthase subunit B.